Here is a 307-residue protein sequence, read N- to C-terminus: MLSVVPSPVLVRAPSKVNLHLGVGDLRPDGYHDLTTVFQALSLGDDLRISPASALTVKVNGEGAAEVPTDRTNLVWKAAVRLAHLVGRAPLVEIVIDKGIPVAGGMAGGSADAAAALVGLNELWDMGLGRDELSALAAELGSDVPFALHGGTALGTGRGERLLPVLSRNTFHWVLAFAKGGLSTPAVFAELDRLREHGDPPRLGDPQALMQALASGDPAQLAPLLGNDLQAAAVSLKPELRRTLRAGVTAGALAGLVSGSGPTCAFLCESADAAVAVAAELAGAGVARSVRTASGPVPGARVIDPES.

Lys-16 is a catalytic residue. 101–111 (PVAGGMAGGSA) provides a ligand contact to ATP. Residue Asp-143 is part of the active site.

This sequence belongs to the GHMP kinase family. IspE subfamily.

It catalyses the reaction 4-CDP-2-C-methyl-D-erythritol + ATP = 4-CDP-2-C-methyl-D-erythritol 2-phosphate + ADP + H(+). It functions in the pathway isoprenoid biosynthesis; isopentenyl diphosphate biosynthesis via DXP pathway; isopentenyl diphosphate from 1-deoxy-D-xylulose 5-phosphate: step 3/6. Functionally, catalyzes the phosphorylation of the position 2 hydroxy group of 4-diphosphocytidyl-2C-methyl-D-erythritol. This Nocardia farcinica (strain IFM 10152) protein is 4-diphosphocytidyl-2-C-methyl-D-erythritol kinase.